The chain runs to 601 residues: Glutathione-regulated potassium-efflux system protein KefB (601 aa).

The next 13 helical transmembrane spans lie at 4–24 (SDFL…VPLA), 29–49 (IGAV…GLGF), 55–75 (EILH…GLEL), 87–107 (IFGV…GLLM), 115–135 (AAVV…LQLM), 152–172 (VLLF…LLAG), 177–197 (HFDW…LIGG), 207–227 (FIAA…LVLG), 230–250 (LFMD…GVLL), 268–288 (GLLL…GVLY), 291–311 (LLWV…VLYL), 324–344 (MQFA…FSTA), and 356–376 (ALLL…MKLV). An RCK N-terminal domain is found at 400 to 519 (KPQVIVVGFG…AGVTQFSRET (120 aa)).

Belongs to the monovalent cation:proton antiporter 2 (CPA2) transporter (TC 2.A.37) family. KefB subfamily. As to quaternary structure, interacts with the regulatory subunit KefG.

It is found in the cell inner membrane. Its function is as follows. Pore-forming subunit of a potassium efflux system that confers protection against electrophiles. Catalyzes K(+)/H(+) antiport. This Escherichia coli (strain ATCC 8739 / DSM 1576 / NBRC 3972 / NCIMB 8545 / WDCM 00012 / Crooks) protein is Glutathione-regulated potassium-efflux system protein KefB.